The chain runs to 271 residues: Eukaryotic translation initiation factor 3 subunit G (271 aa).

2 disordered regions span residues 1 to 29 and 143 to 185; these read MPALDDIKSSWADEVESDSGSLPPPSEVI and KPTK…MRGR. Positions 189–267 constitute an RRM domain; sequence SAIRISNLSE…LILSVEWSKP (79 aa).

It belongs to the eIF-3 subunit G family. Component of the eukaryotic translation initiation factor 3 (eIF-3) complex.

It localises to the cytoplasm. Functionally, RNA-binding component of the eukaryotic translation initiation factor 3 (eIF-3) complex, which is involved in protein synthesis of a specialized repertoire of mRNAs and, together with other initiation factors, stimulates binding of mRNA and methionyl-tRNAi to the 40S ribosome. The eIF-3 complex specifically targets and initiates translation of a subset of mRNAs involved in cell proliferation. This subunit can bind 18S rRNA. The protein is Eukaryotic translation initiation factor 3 subunit G of Anopheles gambiae (African malaria mosquito).